The primary structure comprises 876 residues: MEMKPKYDPREVEAGRYEEWVKNGYFKPSEDKSKETYTIVIPPPNVTGKLHLGHAWDTTLQDIITRMKRMQGYDTLYLPGMDHAGIATQAKVEAKLNEQGITRYDLGREKFLEQAWDWKEEYASFIRAQWAKLGLGLDYSRERFTLDEGLSKAVKKVFVDLYNKGIIYRGERIINWDPKARTALSDIEVIHEDVQGAFYHFKYPYADGEGFIEIATTRPETMLGDTAIVVNPNDERYKDVIGKTVILPIVGRELPILADEYVDIDFGSGAMKVTPAHDPNDFEIGQRHQLENIIVMDENGKMNDKAGKYEGMDRFDCRKQLVKDLKEQDLVIKIEDHFHSVGHSERSGAVVEPYLSTQWFVRMEDLAKRSLDNQKTDDRIDFYPQRFEHTFNQWMENIRDWTISRQLWWGHQIPAWYHKETGEIYVGEEAPTDIENWQQDEDVLDTWFSSALWPFSTLGWPDLESEDFKRYYPTNALVTGYDIIFFWVARMIFQGLEFTDRRPFNDVLLHGLVRAEDGRKMSKSLGNGVDPMDVIDEYGADSLRYFLATGSSPGHDLRYSTEKVESVWNFINKIWNGARFSLMNIGEDFKVEDIDLSGNLSLADKWILTRLNETIATVTDLSDKYEFGEVGRALYNFIWDDFCDWYIEMSKIPMNSNDEEQKQVTRSVLSYTLDNIMRMLHPFMPFVTEKIWQSLPHEGDTIVKASWPEVRESLIFEESKQTMQQLVEIIKSVRQSRVEVNTPLSKEIPILIQAKDKEIETTLSQNKDYLIKFCNPSTLNISTDVEIPEKAMTSVVIAGKVVLPLEGLIDMDKEISRLEKELAKLQSELDRVDKKLSNENFVSKAPEKVINEEKRKKQDYQEKYDGVKARIEQLKA.

The short motif at proline 44–histidine 54 is the 'HIGH' region element. The short motif at lysine 520–serine 524 is the 'KMSKS' region element. Lysine 523 provides a ligand contact to ATP. Residues leucine 805–alanine 876 adopt a coiled-coil conformation.

This sequence belongs to the class-I aminoacyl-tRNA synthetase family. ValS type 1 subfamily. Monomer.

The protein resides in the cytoplasm. It catalyses the reaction tRNA(Val) + L-valine + ATP = L-valyl-tRNA(Val) + AMP + diphosphate. Catalyzes the attachment of valine to tRNA(Val). As ValRS can inadvertently accommodate and process structurally similar amino acids such as threonine, to avoid such errors, it has a 'posttransfer' editing activity that hydrolyzes mischarged Thr-tRNA(Val) in a tRNA-dependent manner. In Staphylococcus aureus (strain Mu3 / ATCC 700698), this protein is Valine--tRNA ligase.